A 148-amino-acid chain; its full sequence is Endoribonuclease YbeY (148 aa).

3 residues coordinate Zn(2+): His105, His109, and Asp115.

This sequence belongs to the endoribonuclease YbeY family. Zn(2+) is required as a cofactor.

It is found in the cytoplasm. Single strand-specific metallo-endoribonuclease involved in late-stage 70S ribosome quality control and in maturation of the 3' terminus of the 16S rRNA. The polypeptide is Endoribonuclease YbeY (Chlorobium phaeovibrioides (strain DSM 265 / 1930) (Prosthecochloris vibrioformis (strain DSM 265))).